A 273-amino-acid polypeptide reads, in one-letter code: NAD kinase (273 aa).

Asp-53 acts as the Proton acceptor in catalysis. Residues 53–54 (DG), Arg-58, 128–129 (NE), Asp-157, 168–173 (TAYNFS), and Ala-192 contribute to the NAD(+) site.

The protein belongs to the NAD kinase family. It depends on a divalent metal cation as a cofactor.

It localises to the cytoplasm. The catalysed reaction is NAD(+) + ATP = ADP + NADP(+) + H(+). In terms of biological role, involved in the regulation of the intracellular balance of NAD and NADP, and is a key enzyme in the biosynthesis of NADP. Catalyzes specifically the phosphorylation on 2'-hydroxyl of the adenosine moiety of NAD to yield NADP. The protein is NAD kinase of Finegoldia magna (strain ATCC 29328 / DSM 20472 / WAL 2508) (Peptostreptococcus magnus).